A 333-amino-acid chain; its full sequence is Adenosine deaminase (333 aa).

Residues H12 and H14 each contribute to the Zn(2+) site. Residues H14, D16, and G170 each contribute to the substrate site. Zn(2+) is bound at residue H197. The active-site Proton donor is E200. D278 is a Zn(2+) binding site. D279 provides a ligand contact to substrate.

This sequence belongs to the metallo-dependent hydrolases superfamily. Adenosine and AMP deaminases family. Adenosine deaminase subfamily. It depends on Zn(2+) as a cofactor.

It carries out the reaction adenosine + H2O + H(+) = inosine + NH4(+). It catalyses the reaction 2'-deoxyadenosine + H2O + H(+) = 2'-deoxyinosine + NH4(+). Catalyzes the hydrolytic deamination of adenosine and 2-deoxyadenosine. The chain is Adenosine deaminase from Salmonella enteritidis PT4 (strain P125109).